Here is a 703-residue protein sequence, read N- to C-terminus: MRESTWVSLLLLLLLPTPQRGGPQDGRRSPEPEPERGPLQPFDLLYASGVAAYYSGDYERAVRDLEAALSSHRRLRDIRTRCARHCAARRPLAPPGAGPGAELPFFRAVLERARCSRSCQSQRLGGPASRHRVSEDVRSDFQRRVPYNYLQRAYIKLNQLEKAMEAAHTFFMANPEHMEMQQDLEDYKATARVEAPLLDREAKPHLESYNAGVKHYEADDFESAIKYFEQALREYFNEDMECRALCEGPQRFEEYEYLGYKGGLYEAIADHYMQVLVCQHECVRELATRPGRLSPIENFLPLHYDYLQFAYYRVGEYVKALECAKAYLMFHPDNEDVLDNVDFYESLLDDSTDPASIEAREDLTAFVKRHKLEAELIKLAAEGLGFSYAEPNYWISYGGRQDENRVPSGVNMDGAEVHGLSMGKKSPPKIGRDLREGGPLLYENITFVYNSEQLNGTQRVLLDNVLSQEQCRELHSVANGIMLVGDGYRGKTSPHTPNEKFEGATVLKALKFGYEGRVPLKSARLFYDISEKARKIVESYFMLNSTLYFSYTHMVCRTALSGQQDRRNDLSHPIHADNCLLDPEANECWKEPPAYTFRDYSALLYMNDDFDGGEFIFTEMDAKTVTASIKPKCGRMISFSSGGENPHGVKAVTRGQRCAVALWFTLDPLYRELERIQADEVIAILDQEQRGKHGLNINPKDEL.

An N-terminal signal peptide occupies residues 1–21; that stretch reads MRESTWVSLLLLLLLPTPQRG. The disordered stretch occupies residues 17–40; sequence TPQRGGPQDGRRSPEPEPERGPLQ. Residues 25–36 are compositionally biased toward basic and acidic residues; sequence DGRRSPEPEPER. 4 TPR repeats span residues 42–75, 144–177, 205–238, and 301–334; these read FDLL…HRRL, RVPY…NPEH, HLES…YFNE, and PLHY…HPDN. Residues asparagine 444 and asparagine 544 are each glycosylated (N-linked (GlcNAc...) asparagine). The region spanning 552–666 is the Fe2OG dioxygenase domain; it reads THMVCRTALS…RCAVALWFTL (115 aa). The Fe cation site is built by histidine 575, aspartate 577, and histidine 647. Arginine 657 is an active-site residue. The Prevents secretion from ER motif lies at 700 to 703; the sequence is KDEL.

The protein belongs to the leprecan family. Requires Fe cation as cofactor. L-ascorbate serves as cofactor. In terms of tissue distribution, detected in kidney. Detected on kidney tubular cells, pancreas acinar cells, Schwann cells of the peripheral nerve in the pinna, and in tunica adventitia, the smooth muscle layer of the aortic wall (at protein level). Detected in lung, skeletal muscle and kidney. Detected in kidney glomeruli and in prehypertrophic regions of long bone from neonates. In the eye, detected in the epithelial layer of the cornea and at lower levels in the sclera at the posterior end of the eye.

It is found in the endoplasmic reticulum. The protein localises to the sarcoplasmic reticulum. Its subcellular location is the golgi apparatus. It catalyses the reaction L-prolyl-[collagen] + 2-oxoglutarate + O2 = trans-3-hydroxy-L-prolyl-[collagen] + succinate + CO2. Its function is as follows. Prolyl 3-hydroxylase that catalyzes the post-translational formation of 3-hydroxyproline on collagens. Contributes to proline 3-hydroxylation of collagen COL4A1 and COL1A1 in tendons, the eye sclera and in the eye lens capsule. Has high activity with the type IV collagen COL4A1, and lower activity with COL1A1. Catalyzes hydroxylation of the first Pro in Gly-Pro-Hyp sequences where Hyp is 4-hydroxyproline. Has no activity on substrates that have proline instead of 4-hydroxyproline in the third position. This is Prolyl 3-hydroxylase 2 from Mus musculus (Mouse).